A 135-amino-acid polypeptide reads, in one-letter code: MGVLSALARGFVRGADRMAEWTSKRGPRTFYKSRGARPTGIVTSSRKFIPIRAMIPEFAVPNLEGFNLKAYVSYKTPAGTEEPMTPEKLFNEVVAPQIQRDIEEGVFSEDNLEKYGLEKTQEGKLFKLHPKNFAR.

The transit peptide at 1 to 13 (MGVLSALARGFVR) directs the protein to the mitochondrion.

This sequence belongs to the mitochondrion-specific ribosomal protein mL41 family. Component of the mitochondrial ribosome large subunit (39S) which comprises a 16S rRNA and about 50 distinct proteins.

The protein localises to the mitochondrion. Its function is as follows. Component of the mitochondrial ribosome large subunit. Also involved in apoptosis and cell cycle. This Danio rerio (Zebrafish) protein is Large ribosomal subunit protein mL41 (mrpl41).